We begin with the raw amino-acid sequence, 256 residues long: Nuclear shuttle protein (256 aa).

The Bipartite nuclear localization signal signature appears at 18–39; sequence NTTNRFPIRRKYVGGHTRPSVR. The Nuclear localization signal motif lies at 81–96; the sequence is SRGPSGDGRSRDYIKL. An interaction with Arabidopsis thaliana NSI protein region spans residues 150–187; sequence ELFGAYSACYVNLRLLNNQQHRYRVLHSVKRFVSSAGD.

The protein belongs to the begomovirus nuclear shuttle protein family. As to quaternary structure, binds to single-stranded and double-stranded viral DNA. Interacts with the host nuclear shuttle interacting (NSI) protein. This interaction may allow NSP to recruit NSI monomers to the viral genome and thus regulate nuclear export of viral genome by NSP.

It localises to the host nucleus. It is found in the host cytoplasm. The protein resides in the host cell membrane. In terms of biological role, binds to the genomic viral ssDNA, shuttles it into and out of the cell nucleus. Begomoviruses use 2 proteins to transport their DNA from cell to cell. The nuclear shuttle protein (NSP) shuttles it between nucleus and cytoplasm and the movement protein (MP) probably transports the DNA-NSP complex to the cell periphery and facilitates movement across the cell wall. The sequence is that of Nuclear shuttle protein from Hewittia sublobata (Coralbush).